A 168-amino-acid polypeptide reads, in one-letter code: Cell division inhibitor SulA (168 aa).

Positions 106–112 (ALLTGNY) are ftsZ binding. Residues 161–168 (KIHSSLYH) form a lon protease binding region.

The protein belongs to the SulA family. Interacts with FtsZ. Post-translationally, is rapidly cleaved and degraded by the Lon protease once DNA damage is repaired.

Component of the SOS system and an inhibitor of cell division. Accumulation of SulA causes rapid cessation of cell division and the appearance of long, non-septate filaments. In the presence of GTP, binds a polymerization-competent form of FtsZ in a 1:1 ratio, thus inhibiting FtsZ polymerization and therefore preventing it from participating in the assembly of the Z ring. This mechanism prevents the premature segregation of damaged DNA to daughter cells during cell division. This chain is Cell division inhibitor SulA, found in Serratia proteamaculans (strain 568).